The following is a 210-amino-acid chain: Orotate phosphoribosyltransferase (210 aa).

5-phospho-alpha-D-ribose 1-diphosphate contacts are provided by residues arginine 94, lysine 98, histidine 100, and 120-128 (EDLISTGGS). Serine 124 serves as a coordination point for orotate.

The protein belongs to the purine/pyrimidine phosphoribosyltransferase family. PyrE subfamily. Homodimer. Mg(2+) is required as a cofactor.

The enzyme catalyses orotidine 5'-phosphate + diphosphate = orotate + 5-phospho-alpha-D-ribose 1-diphosphate. Its pathway is pyrimidine metabolism; UMP biosynthesis via de novo pathway; UMP from orotate: step 1/2. Its function is as follows. Catalyzes the transfer of a ribosyl phosphate group from 5-phosphoribose 1-diphosphate to orotate, leading to the formation of orotidine monophosphate (OMP). This is Orotate phosphoribosyltransferase from Bacillus mycoides (strain KBAB4) (Bacillus weihenstephanensis).